Here is a 263-residue protein sequence, read N- to C-terminus: MTHPQPFIAVIPARLASTRLPNKPLADLGGKPMVVRVAERAREAGAQQVLIASDAQSVLDAAREHGFDAVLTRADHPSGTDRLAEVAAACGWQDDTVVVNVQGDEPLIDPVLVRDVASHLAAHPACAIATAAHPIHDAADVFNPNVVKVALDAQSVALYFSRAPIPWSRDAYQPHWPDVAAMPAPAAPVYRHIGLYAYRARFLRTYPSLAQAPIEQAEQLEQLRALWHGERIAVLVTERAPAAGVDTPADLARVQALFRPDSK.

The protein belongs to the KdsB family.

It is found in the cytoplasm. The catalysed reaction is 3-deoxy-alpha-D-manno-oct-2-ulosonate + CTP = CMP-3-deoxy-beta-D-manno-octulosonate + diphosphate. It participates in nucleotide-sugar biosynthesis; CMP-3-deoxy-D-manno-octulosonate biosynthesis; CMP-3-deoxy-D-manno-octulosonate from 3-deoxy-D-manno-octulosonate and CTP: step 1/1. The protein operates within bacterial outer membrane biogenesis; lipopolysaccharide biosynthesis. In terms of biological role, activates KDO (a required 8-carbon sugar) for incorporation into bacterial lipopolysaccharide in Gram-negative bacteria. The protein is 3-deoxy-manno-octulosonate cytidylyltransferase of Burkholderia multivorans (strain ATCC 17616 / 249).